Reading from the N-terminus, the 387-residue chain is MAEEYVDVVDIEARKKALAVFREKFKEILEQVMRGENPTIMLPKRTLSNTIYDEKRKLLLLGPEKLKRSFFDLHESKKFMQTLLMARIIYEALERNEYPTIRDLYYRGKHTIVYREPGGRRHEENTWDEQRESDAVIRDIEVFTGLLREEMLILSKEKGKVVGNMRIRSGGDIIDLSKMGHGAYAIEPTPDLIEFIDVDAEYVLVVEKDAVFQQLHRIGFWKKHRAILITSAGQPDRATRRFVRRLNEELGLPVYILTDADPYGWYIYSVFKIGSITLSYESERLATPNARFIGVSMTDIFGYKSKKPYLTEQERRNFIIKAKEADIKRAYELKNYKWFQTKKWQIEIDIFLEKKAKLEIEAMTSKGLRFLADKYLPEKIETGDWIE.

A Topo IIA-type catalytic domain is found at 12–160 (EARKKALAVF…MLILSKEKGK (149 aa)). Y106 acts as the O-(5'-phospho-DNA)-tyrosine intermediate in catalysis. Mg(2+) contacts are provided by E207 and D259.

The protein belongs to the TOP6A family. As to quaternary structure, homodimer. Heterotetramer of two Top6A and two Top6B chains. The cofactor is Mg(2+).

The catalysed reaction is ATP-dependent breakage, passage and rejoining of double-stranded DNA.. In terms of biological role, relaxes both positive and negative superturns and exhibits a strong decatenase activity. This Hyperthermus butylicus (strain DSM 5456 / JCM 9403 / PLM1-5) protein is Type 2 DNA topoisomerase 6 subunit A.